A 531-amino-acid chain; its full sequence is Poly(A)-specific ribonuclease PNLDC1 (531 aa).

Mg(2+)-binding residues include aspartate 28, glutamate 30, aspartate 271, and aspartate 365. A helical transmembrane segment spans residues isoleucine 506–leucine 526.

It belongs to the CAF1 family. It depends on Mg(2+) as a cofactor. As to expression, specifically expressed in embryonic stem cells. Highly expressed in testis.

Its subcellular location is the endoplasmic reticulum membrane. It carries out the reaction Exonucleolytic cleavage of poly(A) to 5'-AMP.. 3'-exoribonuclease that has a preference for poly(A) tails of mRNAs, thereby efficiently degrading poly(A) tails. Exonucleolytic degradation of the poly(A) tail is often the first step in the decay of eukaryotic mRNAs and is also used to silence certain maternal mRNAs translationally during oocyte maturation and early embryonic development. May act as a regulator of multipotency in embryonic stem cells. Is a critical factor for proper spermatogenesis, involved in pre-piRNAs processing to generate mature piRNAs. This chain is Poly(A)-specific ribonuclease PNLDC1, found in Mus musculus (Mouse).